The following is a 1543-amino-acid chain: Rho guanine nucleotide exchange factor 12 (1543 aa).

The interval 1 to 62 (MSGTQSTITD…KTKSSSEESR (62 aa)) is disordered. An N-acetylserine modification is found at S2. Basic and acidic residues predominate over residues 28–45 (SPTDKKQKVERSSSHDFD). The residue at position 41 (S41) is a Phosphoserine. The 80-residue stretch at 72–151 (CVIIQKDDNG…LTVQGRPPGS (80 aa)) folds into the PDZ domain. Residues 194 to 262 (VGEENNVVHN…LSKATGSAQD (69 aa)) are a coiled coil. The interval 281 to 355 (AEADPGDGLC…GAPHIIGAED (75 aa)) is disordered. Residues 293–312 (DWSSGDASRPSSDSADSPKS) show a composition bias toward low complexity. S309 bears the Phosphoserine mark. The span at 313-329 (SLRERSYLEEAPERSEG) shows a compositional bias: basic and acidic residues. A Phosphoserine modification is found at S341. The region spanning 367–558 (GQCSCFQSIE…LMYMKYLGVK (192 aa)) is the RGSL domain. A disordered region spans residues 574–710 (FLPKIKQSMK…DSTPRVPTTV (137 aa)). The segment covering 582-592 (MKKDREGEEKG) has biased composition (basic and acidic residues). A Phosphoserine modification is found at S637. The span at 663-676 (ASSMSSATSGTALS) shows a compositional bias: low complexity. T736 bears the Phosphothreonine mark. Positions 787-977 (KRQEVINELF…RQILNYVNQA (191 aa)) constitute a DH domain. Residues 981 to 1004 (AENKQRLEDYQRRLDTSNLKLSEY) adopt a coiled-coil conformation. Residues 1019–1132 (KMIHEGPLVW…WQDLICRMAA (114 aa)) form the PH domain. The segment at 1137-1158 (QSTKPIPLPQPPPCEGDNDEEE) is disordered. S1288, S1327, and S1377 each carry phosphoserine. 2 disordered regions span residues 1386–1405 (EAHSDDNPSEGDGAVKKEEK) and 1441–1468 (PVTGIPAVDSSHQQQHSPQNVHPEGPVS). The span at 1450-1460 (SSHQQQHSPQN) shows a compositional bias: polar residues. Phosphoserine occurs at positions 1457 and 1540.

As to quaternary structure, interacts with GNA12 and GNA13, probably through the RGS-like domain, with RHOA, PLXNB1 and PLXNB2, and through its PDZ domain with IGF1R beta subunit. Interacts with GCSAM. Found in a complex with ARHGEF11 and ARHGEF12; binding to ARHGEF11 and ARHGEF12 enhances CDC42 GEF activity of PLEKHG4B, and PLEKHG4B, in turn, inhibits ARHGEF11- and ARHGEF12-mediated RHOA activation. Expressed in brain, predominantly in neuronal cell bodies.

The protein localises to the cytoplasm. It localises to the membrane. May play a role in the regulation of RhoA GTPase by guanine nucleotide-binding alpha-12 (GNA12) and alpha-13 (GNA13). Acts as guanine nucleotide exchange factor (GEF) for RhoA GTPase and may act as GTPase-activating protein (GAP) for GNA12 and GNA13. This chain is Rho guanine nucleotide exchange factor 12 (Arhgef12), found in Mus musculus (Mouse).